A 238-amino-acid chain; its full sequence is MIAFIVLLSLAAVLQQSSGTVDFASESSNKRENQKQIVDKHNALRRSVRPTARNMLQMEWNSNAAQNAKRWADRCSFAHSPPHLRTVGKIGCGENLFMSSQPYAWSRVIQSWYDENKKFVYGVGANPPGSVIGHYTQIVWYNSHLLGCGAAKCSSSKYLYVCQYCPAGNIIGSIATPYKSGPPCGDCPSACVNGLCTNPCKHHNVFSNCQSLAKQNACQTEWMKSKCAASCFCRTEII.

A signal peptide spans 1–19 (MIAFIVLLSLAAVLQQSSG). A propeptide spanning residues 20–25 (TVDFAS) is cleaved from the precursor. One can recognise an SCP domain in the interval 38 to 164 (VDKHNALRRS…SSKYLYVCQY (127 aa)). Disulfide bonds link Cys-75–Cys-153, Cys-92–Cys-165, Cys-148–Cys-162, Cys-184–Cys-191, Cys-187–Cys-196, Cys-200–Cys-233, Cys-209–Cys-227, and Cys-218–Cys-231. The ShKT domain occupies 200–233 (CKHHNVFSNCQSLAKQNACQTEWMKSKCAASCFC).

Expressed by the venom gland.

The protein localises to the secreted. The chain is Cysteine-rich venom protein kaouthin-2 from Naja kaouthia (Monocled cobra).